A 919-amino-acid chain; its full sequence is GPI ethanolamine phosphate transferase 1 (919 aa).

Residues 1–9 lie on the Cytoplasmic side of the membrane; that stretch reads MWNKTRTTL. The helical transmembrane segment at 10–30 threads the bilayer; the sequence is LAVGVLFHLFYLWSIFDIYFI. Over 31–457 the chain is Lumenal; that stretch reads SPLVHGMSPY…TTYNWRFIRT (427 aa). Asn-90, Asn-138, Asn-198, Asn-202, Asn-286, and Asn-312 each carry an N-linked (GlcNAc...) asparagine glycan. A helical transmembrane segment spans residues 458–478; the sequence is IVTFGFVGWIFFSFIIFLKSF. At 479-488 the chain is on the cytoplasmic side; that stretch reads ILENVIDDQK. A helical transmembrane segment spans residues 489–509; the sequence is ASPLSHAVFGSIGILLNWILF. Topologically, residues 510–512 are lumenal; it reads YQH. The helical transmembrane segment at 513–533 threads the bilayer; it reads SPFNFYMYLLFPLYFWSYIFT. Topologically, residues 534-553 are cytoplasmic; that stretch reads NRSVLRSGIKEFFKGTSPWK. A helical membrane pass occupies residues 554–574; it reads RVLITISIISVYEGIVYGFFH. The Lumenal portion of the chain corresponds to 575 to 576; it reads RW. The chain crosses the membrane as a helical span at residues 577-597; sequence TFTLITNILAFYPFICGVREL. Residue Ser-598 is a topological domain, cytoplasmic. A helical transmembrane segment spans residues 599–619; that stretch reads VNILWIITSVLLSTFTLFDAV. The Lumenal portion of the chain corresponds to 620 to 626; sequence KIEDLNQ. Residues 627-647 traverse the membrane as a helical segment; the sequence is IHLAGLLIILSAFYALYKIHS. The Cytoplasmic portion of the chain corresponds to 648–655; that stretch reads RINSYTRA. A helical membrane pass occupies residues 656–676; it reads IFAIQISLVAAMLAVTHRSVI. Over 677–687 the chain is Lumenal; it reads SLQLRQGLPRE. Residues 688–708 traverse the membrane as a helical segment; that stretch reads SQVAGWIIFFVSLFVMPILHY. Over 709–720 the chain is Cytoplasmic; the sequence is RKPNNDYKVRLL. A helical transmembrane segment spans residues 721-741; that stretch reads IIYLTFAPSFIILTISFESLF. The Lumenal segment spans residues 742 to 776; it reads YFLFTSYMVQWIEIENKIKEMKTQKDENWLQVLRV. Residues 777-797 traverse the membrane as a helical segment; sequence SVIGFFLLQVAFFGTGNVASI. The Cytoplasmic segment spans residues 798–807; that stretch reads SSFSLESVCR. The chain crosses the membrane as a helical span at residues 808-828; that stretch reads LLPIFDPFLMGALLMLKLIIP. Topologically, residues 829–848 are lumenal; sequence YGLLSTCLGILNLKLNFKDY. A helical transmembrane segment spans residues 849–869; sequence TISSLIISMSDILSLNFFYLL. Topologically, residues 870 to 885 are cytoplasmic; that stretch reads RTEGSWLDIGITISNY. The chain crosses the membrane as a helical span at residues 886-906; the sequence is CLAILSSLFMLILEVLGHVLL. Over 907–919 the chain is Lumenal; sequence KNVIIQDKTKKTQ.

It belongs to the PIGG/PIGN/PIGO family. PIGN subfamily. In terms of assembly, interacts with CSF1; CSF1 channels phosphatidylethanolamine to MCD4 in the endoplasmic reticulum at contact sites to support GPI anchor biosynthesis. In terms of processing, N-glycosylated.

The protein localises to the endoplasmic reticulum membrane. Its subcellular location is the golgi apparatus membrane. The protein resides in the vacuole membrane. Its pathway is glycolipid biosynthesis; glycosylphosphatidylinositol-anchor biosynthesis. Its function is as follows. Ethanolamine phosphate transferase involved in glycosylphosphatidylinositol-anchor biosynthesis. Transfers ethanolamine phosphate to the first alpha-1,4-linked mannose of the glycosylphosphatidylinositol precursor of GPI-anchor. Ethanolamine phosphate on the alpha-1,4-linked mannose is essential for further mannosylation by GPI10 and is necessary for an efficient recognition of GPI lipids and GPI proteins by the GPI transamidase, for the efficient transport of GPI anchored proteins from endoplasmic reticulum to Golgi and for the physiological incorporation of ceramides into GPI anchors by lipid remodeling. Also involved in non-mitochondrial ATP movements across membrane and participates in Golgi and endoplasmic reticulum function, Also required for the incorporation of BGL2 into the cell wall. The chain is GPI ethanolamine phosphate transferase 1 (MCD4) from Saccharomyces cerevisiae (strain ATCC 204508 / S288c) (Baker's yeast).